Reading from the N-terminus, the 305-residue chain is NAD kinase (305 aa).

Residue Asp-84 is the Proton acceptor of the active site. Residues Asp-84–Gly-85, Asn-159–Glu-160, His-170, Arg-187, Asp-189, Thr-200–Ser-205, and Gln-260 each bind NAD(+).

Belongs to the NAD kinase family. Requires a divalent metal cation as cofactor.

The protein localises to the cytoplasm. The enzyme catalyses NAD(+) + ATP = ADP + NADP(+) + H(+). Its function is as follows. Involved in the regulation of the intracellular balance of NAD and NADP, and is a key enzyme in the biosynthesis of NADP. Catalyzes specifically the phosphorylation on 2'-hydroxyl of the adenosine moiety of NAD to yield NADP. This chain is NAD kinase, found in Pasteurella multocida (strain Pm70).